The chain runs to 377 residues: Glutamate 5-kinase (377 aa).

Residue Lys20 coordinates ATP. Residues Ser60, Asp147, and Asn159 each coordinate substrate. 179–180 provides a ligand contact to ATP; the sequence is TD. Positions 285-363 constitute a PUA domain; that stretch reads AGRLVIDDGA…DKVYQVLGEA (79 aa).

The protein belongs to the glutamate 5-kinase family.

The protein resides in the cytoplasm. It carries out the reaction L-glutamate + ATP = L-glutamyl 5-phosphate + ADP. It participates in amino-acid biosynthesis; L-proline biosynthesis; L-glutamate 5-semialdehyde from L-glutamate: step 1/2. Its function is as follows. Catalyzes the transfer of a phosphate group to glutamate to form L-glutamate 5-phosphate. The protein is Glutamate 5-kinase of Acinetobacter baumannii (strain AB307-0294).